Here is a 132-residue protein sequence, read N- to C-terminus: Vesicle transport protein GOT1A (132 aa).

Over 1 to 16 (MISITEWQKIGVGTTG) the chain is Cytoplasmic. A helical membrane pass occupies residues 17–37 (FGIFFILFGMLLYFDSVLLAF). Topologically, residues 38-39 (GN) are lumenal. Residues 40 to 60 (LLFLTGLSLIIGLRRTFSFFF) form a helical membrane-spanning segment. The Cytoplasmic portion of the chain corresponds to 61–68 (QRHKFKGT). A helical transmembrane segment spans residues 69–89 (SFFLGGVVIVLLRWPLLGMCL). At 90 to 100 (ETYGFFSLFRG) the chain is on the lumenal side. Residues 101 to 121 (FFPVAFGFLGSASNIPFLSAL) form a helical membrane-spanning segment. At 122-132 (FQRLQGTSSMV) the chain is on the cytoplasmic side.

Belongs to the GOT1 family.

Its subcellular location is the golgi apparatus membrane. Its function is as follows. May be involved in fusion of ER-derived transport vesicles with the Golgi complex. The polypeptide is Vesicle transport protein GOT1A (Bos taurus (Bovine)).